Consider the following 570-residue polypeptide: Urease subunit alpha (570 aa).

Residues G131–Y570 form the Urease domain. H136, H138, and K219 together coordinate Ni(2+). The residue at position 219 (K219) is an N6-carboxylysine. H221 contacts substrate. Ni(2+) is bound by residues H248 and H274. The active-site Proton donor is H322. D362 is a Ni(2+) binding site.

The protein belongs to the metallo-dependent hydrolases superfamily. Urease alpha subunit family. Heterotrimer of UreA (gamma), UreB (beta) and UreC (alpha) subunits. Three heterotrimers associate to form the active enzyme. Requires Ni cation as cofactor. Carboxylation allows a single lysine to coordinate two nickel ions.

Its subcellular location is the cytoplasm. The catalysed reaction is urea + 2 H2O + H(+) = hydrogencarbonate + 2 NH4(+). The protein operates within nitrogen metabolism; urea degradation; CO(2) and NH(3) from urea (urease route): step 1/1. This chain is Urease subunit alpha, found in Rhodopseudomonas palustris (strain BisB18).